The following is a 399-amino-acid chain: Exodeoxyribonuclease 7 large subunit (399 aa).

Belongs to the XseA family. Heterooligomer composed of large and small subunits.

It localises to the cytoplasm. It catalyses the reaction Exonucleolytic cleavage in either 5'- to 3'- or 3'- to 5'-direction to yield nucleoside 5'-phosphates.. Bidirectionally degrades single-stranded DNA into large acid-insoluble oligonucleotides, which are then degraded further into small acid-soluble oligonucleotides. This is Exodeoxyribonuclease 7 large subunit from Clostridium botulinum (strain Eklund 17B / Type B).